The chain runs to 642 residues: A-kinase anchor protein 8-like (642 aa).

Residues 1–269 (MSYTGFVQGS…MRRTWKTWTT (269 aa)) are sufficient for activation of CTE-mediated expression. Asymmetric dimethylarginine; alternate is present on Arg209. Arg209 carries the omega-N-methylarginine; alternate modification. Arg218, Arg238, and Arg248 each carry omega-N-methylarginine. Lys258 carries the N6-acetyllysine modification. Positions 265–382 (KTWTTADFRT…QDKQKKRQRD (118 aa)) are disordered. Thr268 carries the post-translational modification Phosphothreonine. Residues 275–280 (KKKKRK) carry the Nuclear localization signal motif. A Nuclear export signal (NES) motif is present at residues 281–297 (QGGSPDEPDSKATRTDC). Residue Ser284 is modified to Phosphoserine. The span at 288-297 (PDSKATRTDC) shows a compositional bias: basic and acidic residues. The residue at position 293 (Thr293) is a Phosphothreonine. Ser298 is modified (phosphoserine). Residues 299 to 315 (DNSDSDNDEGTEGEAAE) show a composition bias toward acidic residues. Over residues 338–350 (EDGREEGKEDPEK) the composition is skewed to basic and acidic residues. A Nuclear localization signal motif is present at residues 363–365 (KRK). 2 consecutive C2H2 AKAP95-type zinc fingers follow at residues 392 to 414 (CSLC…SKFH) and 485 to 508 (CAAC…TMDH). The disordered stretch occupies residues 546–642 (GENPFTDNPE…EDDEEGGGGP (97 aa)). The segment covering 553-564 (NPEEEKEQDEVE) has biased composition (acidic residues). The span at 585 to 605 (AQPPVPLEPAPGTTTPPPPPP) shows a compositional bias: pro residues. Positions 631 to 642 (DMEDDEEGGGGP) are enriched in acidic residues.

This sequence belongs to the AKAP95 family. As to quaternary structure, interacts (via N-terminus) with DHX9 (via RGG region). Interacts with TMPO isoform Beta, PRPF40A, RNF43, lamin-B. Interacts with HDAC3; increased during mitosis. In terms of processing, phosphorylated on serine or threonine residues possibly by PKA.

The protein localises to the nucleus. It localises to the nucleus matrix. Its subcellular location is the nucleus speckle. The protein resides in the PML body. It is found in the cytoplasm. Its function is as follows. Could play a role in constitutive transport element (CTE)-mediated gene expression by association with DHX9. Increases CTE-dependent nuclear unspliced mRNA export. Proposed to target PRKACA to the nucleus but does not seem to be implicated in the binding of regulatory subunit II of PKA. May be involved in nuclear envelope breakdown and chromatin condensation. May be involved in anchoring nuclear membranes to chromatin in interphase and in releasing membranes from chromating at mitosis. May regulate the initiation phase of DNA replication when associated with TMPO isoform Beta. Required for cell cycle G2/M transition and histone deacetylation during mitosis. In mitotic cells recruits HDAC3 to the vicinity of chromatin leading to deacetylation and subsequent phosphorylation at 'Ser-10' of histone H3; in this function seems to act redundantly with AKAP8. May be involved in regulation of pre-mRNA splicing. This Mus musculus (Mouse) protein is A-kinase anchor protein 8-like (Akap8l).